The chain runs to 339 residues: Mitogen-activated protein kinase kinase kinase 18 (339 aa).

Residues 3-263 (WTRGKTLGRG…ASQLLNHPFL (261 aa)) enclose the Protein kinase domain. ATP contacts are provided by residues 9–17 (LGRGSTATV) and Lys32. Asp131 serves as the catalytic Proton acceptor. Ser301 carries the phosphoserine modification.

The protein belongs to the protein kinase superfamily. Ser/Thr protein kinase family. As to quaternary structure, interacts with ABI1. Binds to MKK3. Associates with SRK2E within the nucleus. Post-translationally, autophosphorylated. Unstable protein degraded by the proteasome pathway; this degradation is promoted by ABI1, but blocked by ABA. As to expression, expressed in roots, leaves and flowers.

The protein localises to the nucleus. The enzyme catalyses L-seryl-[protein] + ATP = O-phospho-L-seryl-[protein] + ADP + H(+). It catalyses the reaction L-threonyl-[protein] + ATP = O-phospho-L-threonyl-[protein] + ADP + H(+). Kinase activity is activated by abscisic acid (ABA). Inhibited by ABI1. Activated by SRK2E. Component of the abscisic acid (ABA) signaling pathway that acts as ABA signal transducer in the context of abiotic stresses. Triggers MPK1, MPK2, MPK7 and MPK14 activation in a MKK3-dependent manner and MPK6 activation in a MKK3-independent manner. Mediates the ABA-dependent activation of the MKK3-MPK7 module. Positive regulator of ABA responses leading to the induction of gene expression (e.g. RD29B and RAB18) and involved in various responses including stomatal development, stomatal movement, inhibition of germination and root growth. Promotes leaf senescence. This Arabidopsis thaliana (Mouse-ear cress) protein is Mitogen-activated protein kinase kinase kinase 18.